The chain runs to 114 residues: Beta-microseminoprotein (114 aa).

The first 20 residues, 1–20, serve as a signal peptide directing secretion; that stretch reads MNVLLGSVVIFATFVTLCNA. 5 cysteine pairs are disulfide-bonded: Cys22-Cys70, Cys38-Cys62, Cys57-Cys93, Cys60-Cys69, and Cys84-Cys107.

It belongs to the beta-microseminoprotein family. Homodimer; Interacts with PI16. In terms of tissue distribution, strongly expressed in prostate, liver, kidney, breast and penis. Also expressed in pancreas, esophagus, stomach, deodenum, colon, trachea, lung, salivary glands and fallopian tube. PSP94 is expressed in lung and breast, whereas PSP57 is found in kidney and bladder.

It localises to the secreted. This chain is Beta-microseminoprotein (MSMB), found in Homo sapiens (Human).